The primary structure comprises 102 residues: MICOS complex subunit MIC12 (102 aa).

The chain crosses the membrane as a helical span at residues 4-26 (VLKLTSVTLAASSLAAAGYFYAF).

Belongs to the MICOS complex subunit Mic12 family. Component of the mitochondrial contact site and cristae organizing system (MICOS) complex.

The protein resides in the mitochondrion inner membrane. Its function is as follows. Component of the MICOS complex, a large protein complex of the mitochondrial inner membrane that plays crucial roles in the maintenance of crista junctions, inner membrane architecture, and formation of contact sites to the outer membrane. In Lachancea thermotolerans (strain ATCC 56472 / CBS 6340 / NRRL Y-8284) (Yeast), this protein is MICOS complex subunit MIC12 (AIM5).